Here is a 167-residue protein sequence, read N- to C-terminus: Phosphopantetheine adenylyltransferase (167 aa).

Thr-9 contributes to the substrate binding site. Residues 9-10 (TF) and His-17 contribute to the ATP site. 3 residues coordinate substrate: Lys-41, Leu-73, and Arg-87. ATP is bound by residues 88–90 (GLR), Glu-98, and 123–129 (YQFISGT).

Belongs to the bacterial CoaD family. As to quaternary structure, homohexamer. Requires Mg(2+) as cofactor.

The protein localises to the cytoplasm. It catalyses the reaction (R)-4'-phosphopantetheine + ATP + H(+) = 3'-dephospho-CoA + diphosphate. It functions in the pathway cofactor biosynthesis; coenzyme A biosynthesis; CoA from (R)-pantothenate: step 4/5. In terms of biological role, reversibly transfers an adenylyl group from ATP to 4'-phosphopantetheine, yielding dephospho-CoA (dPCoA) and pyrophosphate. The chain is Phosphopantetheine adenylyltransferase from Bordetella avium (strain 197N).